Reading from the N-terminus, the 329-residue chain is Alpha-tubulin N-acetyltransferase 1 (329 aa).

The N-acetyltransferase domain occupies 5 to 185; the sequence is SQVALLPKLS…NNFVVFHRYF (181 aa). Residues 119–132 and 155–164 contribute to the acetyl-CoA site; these read FFVD…GFGK and SVKFLAFLQK. 2 disordered regions span residues 218-261 and 306-329; these read PKYQ…GVGK and GARR…TPEH. The segment covering 220–229 has biased composition (polar residues); that stretch reads YQSTTGPNNN. The span at 238–249 shows a compositional bias: pro residues; sequence TPPPPPLPPPLV. Positions 313-329 are enriched in polar residues; sequence PTRSGVQYNIISGTPEH.

Belongs to the acetyltransferase ATAT1 family.

It catalyses the reaction L-lysyl-[alpha-tubulin] + acetyl-CoA = N(6)-acetyl-L-lysyl-[alpha-tubulin] + CoA + H(+). In terms of biological role, specifically acetylates 'Lys-40' in alpha-tubulin on the lumenal side of microtubules. Promotes microtubule destabilization and accelerates microtubule dynamics; this activity may be independent of acetylation activity. Acetylates alpha-tubulin with a slow enzymatic rate, due to a catalytic site that is not optimized for acetyl transfer. Enters the microtubule through each end and diffuses quickly throughout the lumen of microtubules. Acetylates only long/old microtubules because of its slow acetylation rate since it does not have time to act on dynamically unstable microtubules before the enzyme is released. This is Alpha-tubulin N-acetyltransferase 1 from Trypanosoma cruzi (strain CL Brener).